The primary structure comprises 379 residues: Succinyl-diaminopimelate desuccinylase (379 aa).

His-70 serves as a coordination point for Zn(2+). The active site involves Asp-72. Asp-103 serves as a coordination point for Zn(2+). Glu-137 serves as the catalytic Proton acceptor. Zn(2+) contacts are provided by Glu-138, Glu-166, and His-352.

This sequence belongs to the peptidase M20A family. DapE subfamily. Homodimer. Zn(2+) is required as a cofactor. Requires Co(2+) as cofactor.

The enzyme catalyses N-succinyl-(2S,6S)-2,6-diaminopimelate + H2O = (2S,6S)-2,6-diaminopimelate + succinate. The protein operates within amino-acid biosynthesis; L-lysine biosynthesis via DAP pathway; LL-2,6-diaminopimelate from (S)-tetrahydrodipicolinate (succinylase route): step 3/3. Its function is as follows. Catalyzes the hydrolysis of N-succinyl-L,L-diaminopimelic acid (SDAP), forming succinate and LL-2,6-diaminopimelate (DAP), an intermediate involved in the bacterial biosynthesis of lysine and meso-diaminopimelic acid, an essential component of bacterial cell walls. This chain is Succinyl-diaminopimelate desuccinylase, found in Burkholderia pseudomallei (strain 1106a).